The chain runs to 909 residues: Protein translocase subunit SecA (909 aa).

ATP-binding positions include Q85, 103 to 107 (GEGKT), and D512. The interval 866–899 (HETSATGGEEEINKPVVKGKKIGRNDPCPCGSGK) is disordered. Residues C893, C895, C904, and C905 each coordinate Zn(2+).

Belongs to the SecA family. Monomer and homodimer. Part of the essential Sec protein translocation apparatus which comprises SecA, SecYEG and auxiliary proteins SecDF. Other proteins may also be involved. The cofactor is Zn(2+).

It localises to the cell membrane. It is found in the cytoplasm. It carries out the reaction ATP + H2O + cellular proteinSide 1 = ADP + phosphate + cellular proteinSide 2.. Part of the Sec protein translocase complex. Interacts with the SecYEG preprotein conducting channel. Has a central role in coupling the hydrolysis of ATP to the transfer of proteins into and across the cell membrane, serving as an ATP-driven molecular motor driving the stepwise translocation of polypeptide chains across the membrane. The sequence is that of Protein translocase subunit SecA from Finegoldia magna (strain ATCC 29328 / DSM 20472 / WAL 2508) (Peptostreptococcus magnus).